The primary structure comprises 87 residues: Small ribosomal subunit protein bS20 (87 aa).

The interval 1 to 24 (MANTAQARKRARQSVERNKHNSSL) is disordered.

Belongs to the bacterial ribosomal protein bS20 family.

In terms of biological role, binds directly to 16S ribosomal RNA. The polypeptide is Small ribosomal subunit protein bS20 (Bordetella petrii (strain ATCC BAA-461 / DSM 12804 / CCUG 43448)).